A 571-amino-acid chain; its full sequence is Proline--tRNA ligase (571 aa).

This sequence belongs to the class-II aminoacyl-tRNA synthetase family. ProS type 1 subfamily. In terms of assembly, homodimer.

The protein localises to the cytoplasm. The enzyme catalyses tRNA(Pro) + L-proline + ATP = L-prolyl-tRNA(Pro) + AMP + diphosphate. Catalyzes the attachment of proline to tRNA(Pro) in a two-step reaction: proline is first activated by ATP to form Pro-AMP and then transferred to the acceptor end of tRNA(Pro). As ProRS can inadvertently accommodate and process non-cognate amino acids such as alanine and cysteine, to avoid such errors it has two additional distinct editing activities against alanine. One activity is designated as 'pretransfer' editing and involves the tRNA(Pro)-independent hydrolysis of activated Ala-AMP. The other activity is designated 'posttransfer' editing and involves deacylation of mischarged Ala-tRNA(Pro). The misacylated Cys-tRNA(Pro) is not edited by ProRS. This Pasteurella multocida (strain Pm70) protein is Proline--tRNA ligase.